A 121-amino-acid polypeptide reads, in one-letter code: MLTKKEQRLRRSRQTRIRIANQGVARLSVNRTNLHIYASVISGDGTKVLASASTAEVEVRNEIGGSGKGGNVAAAQAIGKRIAEKAKAAGVEKVAFDRAGFAYHGRVKALADAAREAGLQF.

It belongs to the universal ribosomal protein uL18 family. As to quaternary structure, part of the 50S ribosomal subunit; part of the 5S rRNA/L5/L18/L25 subcomplex. Contacts the 5S and 23S rRNAs.

Its function is as follows. This is one of the proteins that bind and probably mediate the attachment of the 5S RNA into the large ribosomal subunit, where it forms part of the central protuberance. The sequence is that of Large ribosomal subunit protein uL18 from Polaromonas naphthalenivorans (strain CJ2).